A 405-amino-acid polypeptide reads, in one-letter code: Bifunctional enzyme IspD/IspF (405 aa).

Residues 1 to 246 (MLQMPSKQPI…KLSASLLPDV (246 aa)) are 2-C-methyl-D-erythritol 4-phosphate cytidylyltransferase. A 2-C-methyl-D-erythritol 2,4-cyclodiphosphate synthase region spans residues 247–405 (RTGNGYDVHQ…TATVVYRGRT (159 aa)). A divalent metal cation is bound by residues D253 and H255. 4-CDP-2-C-methyl-D-erythritol 2-phosphate is bound by residues 253–255 (DVH) and 279–280 (HS). Position 287 (H287) interacts with a divalent metal cation. Residues 301 to 303 (DIG), 377 to 380 (TTNE), F384, and R387 contribute to the 4-CDP-2-C-methyl-D-erythritol 2-phosphate site.

The protein in the N-terminal section; belongs to the IspD/TarI cytidylyltransferase family. IspD subfamily. It in the C-terminal section; belongs to the IspF family. The cofactor is a divalent metal cation.

The catalysed reaction is 2-C-methyl-D-erythritol 4-phosphate + CTP + H(+) = 4-CDP-2-C-methyl-D-erythritol + diphosphate. It catalyses the reaction 4-CDP-2-C-methyl-D-erythritol 2-phosphate = 2-C-methyl-D-erythritol 2,4-cyclic diphosphate + CMP. The protein operates within isoprenoid biosynthesis; isopentenyl diphosphate biosynthesis via DXP pathway; isopentenyl diphosphate from 1-deoxy-D-xylulose 5-phosphate: step 2/6. It functions in the pathway isoprenoid biosynthesis; isopentenyl diphosphate biosynthesis via DXP pathway; isopentenyl diphosphate from 1-deoxy-D-xylulose 5-phosphate: step 4/6. Bifunctional enzyme that catalyzes the formation of 4-diphosphocytidyl-2-C-methyl-D-erythritol from CTP and 2-C-methyl-D-erythritol 4-phosphate (MEP) (IspD), and catalyzes the conversion of 4-diphosphocytidyl-2-C-methyl-D-erythritol 2-phosphate (CDP-ME2P) to 2-C-methyl-D-erythritol 2,4-cyclodiphosphate (ME-CPP) with a corresponding release of cytidine 5-monophosphate (CMP) (IspF). This chain is Bifunctional enzyme IspD/IspF, found in Rhizobium etli (strain CIAT 652).